The sequence spans 409 residues: Glycosaminoglycan xylosylkinase (409 aa).

Residues 1 to 6 (MKLKQR) are Cytoplasmic-facing. The helical; Signal-anchor for type II membrane protein transmembrane segment at 7-25 (VVVLCAVLFLLGLAKVFLL) threads the bilayer. At 26–409 (DGGEGSAASR…IEDRMNLPHP (384 aa)) the chain is on the lumenal side. Residues Q107 and K123 each contribute to the ATP site. D142 serves as a coordination point for Mn(2+). An N-linked (GlcNAc...) asparagine glycan is attached at N193. Intrachain disulfides connect C196/C211 and C201/C204. 222–225 (TLWL) is a binding site for ATP. Intrachain disulfides connect C257–C331 and C332–C389. D289 is an active-site residue. Residues E294 and D309 each coordinate ATP. D309 is a binding site for Mn(2+).

The protein belongs to the FAM20 family. Requires Mn(2+) as cofactor.

The protein resides in the golgi apparatus membrane. The catalysed reaction is 3-O-(beta-D-galactosyl-(1-&gt;3)-beta-D-galactosyl-(1-&gt;4)-beta-D-xylosyl)-L-seryl-[protein] + ATP = 3-O-(beta-D-galactosyl-(1-&gt;3)-beta-D-galactosyl-(1-&gt;4)-beta-D-2-O-phosphoxylosyl)-L-seryl-[protein] + ADP + H(+). Responsible for the 2-O-phosphorylation of xylose in the glycosaminoglycan-protein linkage region of proteoglycans thereby regulating the amount of mature GAG chains. Sulfated glycosaminoglycans (GAGs), including heparan sulfate and chondroitin sulfate, are synthesized on the so-called common GAG-protein linkage region (GlcUAbeta1-3Galbeta1-3Galbeta1-4Xylbeta1-O-Ser) of core proteins, which is formed by the stepwise addition of monosaccharide residues by the respective specific glycosyltransferases. The protein is Glycosaminoglycan xylosylkinase of Danio rerio (Zebrafish).